The primary structure comprises 317 residues: Ret finger protein-like 1 (317 aa).

The segment at 40–82 (CPVCSDYLEKPMSLECGCAVCFKCINSLQKEPHGEDLLCCCCS) adopts an RING-type zinc-finger fold. The B30.2/SPRY domain maps to 107–301 (EPKLKKILQM…DKSVLSICPV (195 aa)).

In terms of processing, phosphorylated by PKC and CDK1. The antiproliferative effect seems to be positively regulated by PKC phosphorylation and negatively by CDK1 phosphorylation. Seems to be expressed in prostate and less abundantly in adult brain, fetal liver, and fetal kidney.

The protein resides in the cytoplasm. Its subcellular location is the nucleus. Functionally, negatively regulates the G2-M phase transition, possibly by promoting cyclin B1/CCNB1 and CDK1 proteasomal degradation and thereby preventing their accumulation during interphase. The protein is Ret finger protein-like 1 (RFPL1) of Homo sapiens (Human).